Here is a 318-residue protein sequence, read N- to C-terminus: Myoblast determination protein 1 (318 aa).

Met1 is covalently cross-linked (Peptide (Met-Gly) (interchain with G-Cter in ubiquitin)). Lys104 carries the N6-methyllysine; by EHMT2 modification. One can recognise a bHLH domain in the interval 109 to 160 (DRRKAATMRERRRLSKVNEAFETLKRCTSSNPNQRLPKVEILRNAIRYIEGL). Disordered stretches follow at residues 174–224 (AAAA…RRRN) and 266–318 (APAL…YQVL). Positions 197 to 207 (SDASSPRSNCS) are enriched in polar residues. The segment covering 266 to 276 (APALLLADAPP) has biased composition (low complexity).

As to quaternary structure, efficient DNA binding requires dimerization with another bHLH protein. Seems to form active heterodimers with ITF-2. Interacts with SUV39H1. Interacts with DDX5. Interacts with CHD2. Interacts with TSC22D3. Interacts with SETD3. Interacts with P-TEFB complex; promotes the transcriptional activity of MYOD1 through its CDK9-mediated phosphorylation. Interacts with CSRP3. Interacts with NUPR1. Phosphorylated by CDK9. This phosphorylation promotes its function in muscle differentiation. In terms of processing, acetylated by a complex containing EP300 and PCAF. The acetylation is essential to activate target genes. Conversely, its deacetylation by SIRT1 inhibits its function. Post-translationally, ubiquitinated on the N-terminus; which is required for proteasomal degradation. Methylation at Lys-104 by EHMT2/G9a inhibits myogenic activity.

It localises to the nucleus. Its function is as follows. Acts as a transcriptional activator that promotes transcription of muscle-specific target genes and plays a role in muscle differentiation. Together with MYF5 and MYOG, co-occupies muscle-specific gene promoter core region during myogenesis. Induces fibroblasts to differentiate into myoblasts. Interacts with and is inhibited by the twist protein. This interaction probably involves the basic domains of both proteins. In Bos taurus (Bovine), this protein is Myoblast determination protein 1 (MYOD1).